A 243-amino-acid chain; its full sequence is UPF0758 protein AM1_4368 (243 aa).

Residues Val-113–Leu-235 form the MPN domain. Zn(2+)-binding residues include His-184, His-186, and Asp-197. The short motif at His-184–Asp-197 is the JAMM motif element.

Belongs to the UPF0758 family.

This Acaryochloris marina (strain MBIC 11017) protein is UPF0758 protein AM1_4368.